A 607-amino-acid chain; its full sequence is DNA mismatch repair protein MutL (607 aa).

Belongs to the DNA mismatch repair MutL/HexB family.

Its function is as follows. This protein is involved in the repair of mismatches in DNA. It is required for dam-dependent methyl-directed DNA mismatch repair. May act as a 'molecular matchmaker', a protein that promotes the formation of a stable complex between two or more DNA-binding proteins in an ATP-dependent manner without itself being part of a final effector complex. The polypeptide is DNA mismatch repair protein MutL (Anaeromyxobacter sp. (strain K)).